We begin with the raw amino-acid sequence, 388 residues long: Succinate--CoA ligase [ADP-forming] subunit beta (388 aa).

The region spanning 9–244 (KALFAEYGLP…PSQDDAREAH (236 aa)) is the ATP-grasp domain. Residues lysine 46, 53-55 (GRG), glutamate 99, threonine 102, and glutamate 107 each bind ATP. Residues asparagine 199 and aspartate 213 each coordinate Mg(2+). Substrate is bound by residues asparagine 264 and 321–323 (GIV).

This sequence belongs to the succinate/malate CoA ligase beta subunit family. In terms of assembly, heterotetramer of two alpha and two beta subunits. It depends on Mg(2+) as a cofactor.

The catalysed reaction is succinate + ATP + CoA = succinyl-CoA + ADP + phosphate. It carries out the reaction GTP + succinate + CoA = succinyl-CoA + GDP + phosphate. It participates in carbohydrate metabolism; tricarboxylic acid cycle; succinate from succinyl-CoA (ligase route): step 1/1. Its function is as follows. Succinyl-CoA synthetase functions in the citric acid cycle (TCA), coupling the hydrolysis of succinyl-CoA to the synthesis of either ATP or GTP and thus represents the only step of substrate-level phosphorylation in the TCA. The beta subunit provides nucleotide specificity of the enzyme and binds the substrate succinate, while the binding sites for coenzyme A and phosphate are found in the alpha subunit. The chain is Succinate--CoA ligase [ADP-forming] subunit beta from Shewanella amazonensis (strain ATCC BAA-1098 / SB2B).